A 269-amino-acid polypeptide reads, in one-letter code: Surfeit locus protein 4 (269 aa).

5 helical membrane-spanning segments follow: residues 64–84 (LLASSFVFLNLLGQLTGCVLV), 92–112 (YACFGLFGIIALQTIAYSILW), 179–199 (FFSIVQNIVGTALMILVAIGF), 203–223 (LAALTLVVWLFAINVYFNAFW), and 239–259 (FFQTMSVIGGLLLVVALGPGG). The Di-lysine motif signature appears at 266–269 (KKEW).

It belongs to the SURF4 family. Found in a complex composed at least of SURF4, TMED2 and TMED10. May interact with LMAN1. Interacts with ZFYVE27 and with KIF5A in a ZFYVE27-dependent manner. Interacts with STING1. Interacts with SAR1B. Interacts with TMEM41B.

The protein localises to the endoplasmic reticulum membrane. Its subcellular location is the endoplasmic reticulum-Golgi intermediate compartment membrane. The protein resides in the golgi apparatus membrane. Endoplasmic reticulum cargo receptor that mediates the export of lipoproteins by recruiting cargos into COPII vesicles to facilitate their secretion. Acts as a cargo receptor for lipoproteins bearing both APOB and APOA1, thereby regulating lipoprotein delivery and the maintenance of lipid homeostasis. Synergizes with the GTPase SAR1B to mediate transport of circulating lipoproteins. Promotes the secretion of PCSK9. Also mediates the efficient secretion of erythropoietin (EPO). May also play a role in the maintenance of the architecture of the endoplasmic reticulum-Golgi intermediate compartment and of the Golgi. The polypeptide is Surfeit locus protein 4 (Homo sapiens (Human)).